A 397-amino-acid polypeptide reads, in one-letter code: Succinate--CoA ligase [ADP-forming] subunit beta (397 aa).

In terms of domain architecture, ATP-grasp spans 9-254; the sequence is KALLRSYGAP…ETEEDPKELA (246 aa). Residues lysine 46, 53–55, glutamate 109, serine 112, and glutamate 117 contribute to the ATP site; that span reads GRG. Mg(2+)-binding residues include asparagine 209 and aspartate 223. Substrate contacts are provided by residues asparagine 274 and 331–333; that span reads GIM.

The protein belongs to the succinate/malate CoA ligase beta subunit family. As to quaternary structure, heterotetramer of two alpha and two beta subunits. Requires Mg(2+) as cofactor.

It carries out the reaction succinate + ATP + CoA = succinyl-CoA + ADP + phosphate. The enzyme catalyses GTP + succinate + CoA = succinyl-CoA + GDP + phosphate. Its pathway is carbohydrate metabolism; tricarboxylic acid cycle; succinate from succinyl-CoA (ligase route): step 1/1. Its function is as follows. Succinyl-CoA synthetase functions in the citric acid cycle (TCA), coupling the hydrolysis of succinyl-CoA to the synthesis of either ATP or GTP and thus represents the only step of substrate-level phosphorylation in the TCA. The beta subunit provides nucleotide specificity of the enzyme and binds the substrate succinate, while the binding sites for coenzyme A and phosphate are found in the alpha subunit. This chain is Succinate--CoA ligase [ADP-forming] subunit beta, found in Cereibacter sphaeroides (strain ATCC 17025 / ATH 2.4.3) (Rhodobacter sphaeroides).